A 113-amino-acid polypeptide reads, in one-letter code: Hydrogenase maturation factor HypA (113 aa).

H2 is a binding site for Ni(2+). Residues C73, C76, C89, and C92 each coordinate Zn(2+).

It belongs to the HypA/HybF family.

In terms of biological role, involved in the maturation of [NiFe] hydrogenases. Required for nickel insertion into the metal center of the hydrogenase. This chain is Hydrogenase maturation factor HypA, found in Cereibacter sphaeroides (strain ATCC 17023 / DSM 158 / JCM 6121 / CCUG 31486 / LMG 2827 / NBRC 12203 / NCIMB 8253 / ATH 2.4.1.) (Rhodobacter sphaeroides).